A 199-amino-acid polypeptide reads, in one-letter code: Type-4 uracil-DNA glycosylase (199 aa).

[4Fe-4S] cluster is bound by residues Cys14 and Cys17. Residues 41-43 (GEA), Phe55, and Asn81 contribute to the uracil site. The interval 77–114 (VYITNVLKCRPPNNRDPTPEEVEKCGDYLVRQLEAIRP) is pseudo-FCL. The [4Fe-4S] cluster site is built by Cys85 and Cys101. His163 is a binding site for uracil.

Belongs to the uracil-DNA glycosylase (UDG) superfamily. Type 4 (UDGa) family.

The catalysed reaction is Hydrolyzes single-stranded DNA or mismatched double-stranded DNA and polynucleotides, releasing free uracil.. With respect to regulation, product-inhibited by both uracil and apurinic/apyrimidinic sites. In terms of biological role, removes uracil bases that are present in DNA as a result of either deamination of cytosine or misincorporation of dUMP instead of dTMP. Can remove uracil from double-stranded DNA containing either a U/G or U/A base pair as well as from single-stranded DNA. This chain is Type-4 uracil-DNA glycosylase, found in Archaeoglobus fulgidus (strain ATCC 49558 / DSM 4304 / JCM 9628 / NBRC 100126 / VC-16).